The primary structure comprises 758 residues: 5-methyltetrahydropteroyltriglutamate--homocysteine methyltransferase (758 aa).

Residues 16–19 (RELK) and K112 each bind 5-methyltetrahydropteroyltri-L-glutamate. Residues 433-435 (IGS) and E486 contribute to the L-homocysteine site. L-methionine is bound by residues 433-435 (IGS) and E486. 5-methyltetrahydropteroyltri-L-glutamate contacts are provided by residues 517–518 (RC) and W563. D601 lines the L-homocysteine pocket. Residue D601 coordinates L-methionine. E607 is a binding site for 5-methyltetrahydropteroyltri-L-glutamate. Zn(2+) is bound by residues H643, C645, and E667. The active-site Proton donor is the H696. C728 serves as a coordination point for Zn(2+).

It belongs to the vitamin-B12 independent methionine synthase family. The cofactor is Zn(2+).

The catalysed reaction is 5-methyltetrahydropteroyltri-L-glutamate + L-homocysteine = tetrahydropteroyltri-L-glutamate + L-methionine. The protein operates within amino-acid biosynthesis; L-methionine biosynthesis via de novo pathway; L-methionine from L-homocysteine (MetE route): step 1/1. Its function is as follows. Catalyzes the transfer of a methyl group from 5-methyltetrahydrofolate to homocysteine resulting in methionine formation. This Neisseria gonorrhoeae (strain ATCC 700825 / FA 1090) protein is 5-methyltetrahydropteroyltriglutamate--homocysteine methyltransferase.